Reading from the N-terminus, the 609-residue chain is Protein KINESIN LIGHT CHAIN-RELATED 1 (609 aa).

The disordered stretch occupies residues 1–77 (MPAMPGLVSV…TAAVIDVDDP (77 aa)). Positions 38-55 (KKTPSSTPSRSKPSPNRS) are enriched in low complexity. TPR repeat units follow at residues 140-173 (AMSLHVLAAIYCSLGRFDEAVPPLERAIQVPDPT), 183-216 (FSGHMQLGDTLSMLGQIDRSIACYEEGLKIQIQT), 225-258 (GETCRYLAEAYVQAMQFNKAEELCKKTLEIHRAH), 267-301 (AADRRLMAIICEAKGDYENALEHLVLASMAMIASG), 307-340 (ASIDVSIGNIYMSLCRFDEAVFSYQKALTVFKAS), 349-382 (ASVFVRLAELYHRTGKLRESKSYCENALRIYNKP), 392-425 (AGGLTEISAIYESVDEPEEALKLLQKSMKLLEDK), 433-466 (AGLEARMGVMYYTVGRYEDARNAFESAVTKLRAA), 474-507 (GVVLNQMGLACVQLFKIDEAGELFEEARGILEQE), and 516-549 (LGVYSNLAATYDAMGRIEDAIEILEQVLKLREEK). Positions 582 to 609 (LQNLIDPNARPPKKESSAKKWPSLGFKF) are disordered.

This sequence belongs to the kinesin light chain family. In terms of assembly, interacts with IQD1.

Its subcellular location is the cytoplasm. The protein resides in the cytoskeleton. The sequence is that of Protein KINESIN LIGHT CHAIN-RELATED 1 from Arabidopsis thaliana (Mouse-ear cress).